Reading from the N-terminus, the 123-residue chain is Histone H1-like protein HC1 (123 aa).

The disordered stretch occupies residues 54-123; it reads IKAEKSGLLK…KPSKARGFRK (70 aa). Basic residues predominate over residues 61–75; that stretch reads LLKRKPSTKAPAKVK. Residues 85–102 are compositionally biased toward low complexity; the sequence is KSSAAAAKTSKAVKASKP. Over residues 103-123 the composition is skewed to basic residues; it reads ASKKTAAKKVKKPSKARGFRK.

This sequence belongs to the histone H1/H5 family. HCT subfamily.

Functionally, might have a role analogous to that of eukaryotic histone proteins. The sequence is that of Histone H1-like protein HC1 (hctA) from Chlamydia pneumoniae (Chlamydophila pneumoniae).